The primary structure comprises 396 residues: Arginine biosynthesis bifunctional protein ArgJ (396 aa).

Residues threonine 150, lysine 177, threonine 188, glutamate 267, asparagine 391, and threonine 396 each contribute to the substrate site. Threonine 188 functions as the Nucleophile in the catalytic mechanism.

This sequence belongs to the ArgJ family. As to quaternary structure, heterotetramer of two alpha and two beta chains.

The protein resides in the cytoplasm. It carries out the reaction N(2)-acetyl-L-ornithine + L-glutamate = N-acetyl-L-glutamate + L-ornithine. The catalysed reaction is L-glutamate + acetyl-CoA = N-acetyl-L-glutamate + CoA + H(+). It functions in the pathway amino-acid biosynthesis; L-arginine biosynthesis; L-ornithine and N-acetyl-L-glutamate from L-glutamate and N(2)-acetyl-L-ornithine (cyclic): step 1/1. Its pathway is amino-acid biosynthesis; L-arginine biosynthesis; N(2)-acetyl-L-ornithine from L-glutamate: step 1/4. Functionally, catalyzes two activities which are involved in the cyclic version of arginine biosynthesis: the synthesis of N-acetylglutamate from glutamate and acetyl-CoA as the acetyl donor, and of ornithine by transacetylation between N(2)-acetylornithine and glutamate. In Wolinella succinogenes (strain ATCC 29543 / DSM 1740 / CCUG 13145 / JCM 31913 / LMG 7466 / NCTC 11488 / FDC 602W) (Vibrio succinogenes), this protein is Arginine biosynthesis bifunctional protein ArgJ.